Here is a 263-residue protein sequence, read N- to C-terminus: Endonuclease 8 (263 aa).

P2 acts as the Schiff-base intermediate with DNA in catalysis. The active-site Proton donor is the E3. The active-site Proton donor; for beta-elimination activity is K53. DNA-binding residues include Q70, R125, and N169. The FPG-type zinc finger occupies 229-263 (KVFHRDGEPCERCGGIIEKTTLSSRPFYWCPGCQH). Catalysis depends on R253, which acts as the Proton donor; for delta-elimination activity.

This sequence belongs to the FPG family. The cofactor is Zn(2+).

The catalysed reaction is 2'-deoxyribonucleotide-(2'-deoxyribose 5'-phosphate)-2'-deoxyribonucleotide-DNA = a 3'-end 2'-deoxyribonucleotide-(2,3-dehydro-2,3-deoxyribose 5'-phosphate)-DNA + a 5'-end 5'-phospho-2'-deoxyribonucleoside-DNA + H(+). Involved in base excision repair of DNA damaged by oxidation or by mutagenic agents. Acts as a DNA glycosylase that recognizes and removes damaged bases. Has a preference for oxidized pyrimidines, such as thymine glycol, 5,6-dihydrouracil and 5,6-dihydrothymine. Has AP (apurinic/apyrimidinic) lyase activity and introduces nicks in the DNA strand. Cleaves the DNA backbone by beta-delta elimination to generate a single-strand break at the site of the removed base with both 3'- and 5'-phosphates. The protein is Endonuclease 8 of Escherichia coli O127:H6 (strain E2348/69 / EPEC).